The following is a 320-amino-acid chain: Porphobilinogen deaminase (320 aa).

Position 248 is an S-(dipyrrolylmethanemethyl)cysteine (Cys-248).

Belongs to the HMBS family. In terms of assembly, monomer. The cofactor is dipyrromethane.

It carries out the reaction 4 porphobilinogen + H2O = hydroxymethylbilane + 4 NH4(+). It participates in porphyrin-containing compound metabolism; protoporphyrin-IX biosynthesis; coproporphyrinogen-III from 5-aminolevulinate: step 2/4. It functions in the pathway porphyrin-containing compound metabolism; chlorophyll biosynthesis. Tetrapolymerization of the monopyrrole PBG into the hydroxymethylbilane pre-uroporphyrinogen in several discrete steps. The chain is Porphobilinogen deaminase from Synechococcus elongatus (strain ATCC 33912 / PCC 7942 / FACHB-805) (Anacystis nidulans R2).